A 489-amino-acid chain; its full sequence is MTFRNCVAVDLGASSGRVMLARYERECRSLTLREIHRFNNGLHSQNGYVTWNVDSLESAIRLGLNKVCEEGIRIDSIGIDTWGVDFVLLDQQGQRVGLPVAYRDSRSNGLMAQAQQQLGKRDIYQRSGIQFLPFNTLYQLRALTEQQPELIPHIAHALLMPDYFSYRLTGKMNWEYTNATTTQLVNINSDDWDESLLAWSGANKAWFGRPTHPGNVIGHWICPQGNEIPVVAVASHDTASAVIASPLNGSRAAYLSSGTWSLMGFESQTPFTNDTALAANITNEGGAEGRYRVLKNIMGLWLLQRVLQERQINDLPALIAATQALPACRFIINPNDDRFINPEAMCSEIQAACREMAQPLPESDAELARCIFDSLALLYADVLHELAQLRGEDFSQLHIVGGGCQNTLLNQLCADACGIRVIAGPVEASTLGNIGIQLMTLDELNNVDDFRQVVSTTANLTTFTPNPDSEIAHYVAQLHSTRQTKELCA.

Residue 13-17 participates in ATP binding; that stretch reads ASSGR. C68 and C222 are oxidised to a cystine. Residues G83 and 236-238 contribute to the substrate site; that span reads HDT. The active-site Proton acceptor is D237. T259 contacts ATP. Residue N296 coordinates substrate. An ATP-binding site is contributed by Q304. Cysteines 353 and 370 form a disulfide. G402 provides a ligand contact to ATP. An intrachain disulfide couples C413 to C417.

Belongs to the rhamnulokinase family. It depends on Mg(2+) as a cofactor.

It carries out the reaction L-rhamnulose + ATP = L-rhamnulose 1-phosphate + ADP + H(+). It functions in the pathway carbohydrate degradation; L-rhamnose degradation; glycerone phosphate from L-rhamnose: step 2/3. Its function is as follows. Involved in the catabolism of L-rhamnose (6-deoxy-L-mannose). Catalyzes the transfer of the gamma-phosphate group from ATP to the 1-hydroxyl group of L-rhamnulose to yield L-rhamnulose 1-phosphate. This Shigella sonnei (strain Ss046) protein is Rhamnulokinase.